A 260-amino-acid chain; its full sequence is UPF0246 protein BPSL1241 (260 aa).

The protein belongs to the UPF0246 family.

The polypeptide is UPF0246 protein BPSL1241 (Burkholderia pseudomallei (strain K96243)).